The primary structure comprises 347 residues: N-acetyl-gamma-glutamyl-phosphate reductase (347 aa).

The active site involves cysteine 151.

The protein belongs to the NAGSA dehydrogenase family. Type 1 subfamily.

The protein localises to the cytoplasm. It catalyses the reaction N-acetyl-L-glutamate 5-semialdehyde + phosphate + NADP(+) = N-acetyl-L-glutamyl 5-phosphate + NADPH + H(+). Its pathway is amino-acid biosynthesis; L-arginine biosynthesis; N(2)-acetyl-L-ornithine from L-glutamate: step 3/4. Functionally, catalyzes the NADPH-dependent reduction of N-acetyl-5-glutamyl phosphate to yield N-acetyl-L-glutamate 5-semialdehyde. This Corynebacterium glutamicum (strain R) protein is N-acetyl-gamma-glutamyl-phosphate reductase.